The sequence spans 572 residues: Urease subunit alpha (572 aa).

Residues 136–572 enclose the Urease domain; it reads GGIDTHIHFI…VPLGQRYFLF (437 aa). 3 residues coordinate Ni(2+): His141, His143, and Lys224. The residue at position 224 (Lys224) is an N6-carboxylysine. Substrate is bound at residue His226. Ni(2+)-binding residues include His253 and His279. His327 serves as the catalytic Proton donor. Residue Asp367 participates in Ni(2+) binding.

This sequence belongs to the metallo-dependent hydrolases superfamily. Urease alpha subunit family. In terms of assembly, heterotrimer of UreA (gamma), UreB (beta) and UreC (alpha) subunits. Three heterotrimers associate to form the active enzyme. It depends on Ni cation as a cofactor. In terms of processing, carboxylation allows a single lysine to coordinate two nickel ions.

It localises to the cytoplasm. The catalysed reaction is urea + 2 H2O + H(+) = hydrogencarbonate + 2 NH4(+). Its pathway is nitrogen metabolism; urea degradation; CO(2) and NH(3) from urea (urease route): step 1/1. This Haemophilus influenzae (strain PittGG) protein is Urease subunit alpha.